The following is a 391-amino-acid chain: Cdc42 effector protein 1 (391 aa).

Phosphoserine is present on residues S19 and S27. Residue T34 is modified to Phosphothreonine. In terms of domain architecture, CRIB spans 38-52 (ISHPLGDFRHTMHVG). Position 39 is a phosphoserine (S39). R53 carries the omega-N-methylarginine modification. 7 positions are modified to phosphoserine: S65, S73, S77, S101, S113, S121, and S139. Positions 163–189 (ISRLPRSEKPHDRDRDGSFPSEPGLRR) are disordered. Positions 167-179 (PRSEKPHDRDRDG) are enriched in basic and acidic residues. Phosphoserine occurs at positions 180, 190, 192, and 195. 8 tandem repeats follow at residues 220–226 (PAAETPA), 227–233 (PAANPPA), 234–240 (PTANPTG), 241–247 (PAANPPA), 248–254 (TTANPPA), 255–261 (PAANPSA), 262–268 (PAATPTG), and 269–275 (PAANPPA). The interval 220 to 275 (PAAETPAPAANPPAPTANPTGPAANPPATTANPPAPAANPSAPAATPTGPAANPPA) is 8 X 7 AA tandem repeats of [PT]-[AT]-A-[ENT]-[PT]-[PTS]-[AG]. Residues 221–338 (AAETPAPAAN…HHYPEMDARQ (118 aa)) form a disordered region. Residues 236–270 (ANPTGPAANPPATTANPPAPAANPSAPAATPTGPA) show a composition bias toward low complexity. At S303 the chain carries Phosphoserine. The segment covering 327-338 (GGHHYPEMDARQ) has biased composition (basic and acidic residues). Phosphoserine is present on residues S350 and S353. The segment at 354 to 391 (LDEEWRAPQAGSRTPVPSTVQANTFEFADAEEDDEVKV) is disordered. The segment covering 364–377 (GSRTPVPSTVQANT) has biased composition (polar residues). Residues 381-391 (ADAEEDDEVKV) show a composition bias toward acidic residues.

This sequence belongs to the BORG/CEP family. Interacts with RHOQ and CDC42, in a GTP-dependent manner. Endothelial and bone marrow stromal cells.

Its subcellular location is the endomembrane system. It is found in the cytoplasm. It localises to the cytoskeleton. Functionally, probably involved in the organization of the actin cytoskeleton. Induced membrane extensions in fibroblasts. The polypeptide is Cdc42 effector protein 1 (CDC42EP1) (Homo sapiens (Human)).